The chain runs to 152 residues: uncharacterized protein (152 aa).

This is an uncharacterized protein from Rickettsia prowazekii (strain Madrid E).